Consider the following 337-residue polypeptide: uncharacterized protein (337 aa).

Topologically, residues 1–10 are cytoplasmic; the sequence is MKLKINIRPN. The helical transmembrane segment at 11–31 threads the bilayer; that stretch reads EIIFLICIVVIFSFSYTLTYF. At 32-100 the chain is on the extracellular side; the sequence is DSPIFKEHYI…LEKLFSFSDN (69 aa). A helical membrane pass occupies residues 101–121; that stretch reads ILIVLIIVQVIVGFLIFLLSV. Topologically, residues 122-197 are cytoplasmic; the sequence is EKLSKCNYQL…KILIIKKKRD (76 aa). The span at 148–167 shows a compositional bias: low complexity; the sequence is NNNNEDINNNNNNNNNNNNK. Residues 148–179 are disordered; that stretch reads NNNNEDINNNNNNNNNNNNKNKNDERNNEEIE. The chain crosses the membrane as a helical span at residues 198–218; the sequence is ILLAIIIFFLVLLGVLTIIYV. At 219-285 the chain is on the extracellular side; that stretch reads SFIPLNIRKA…SWSLDSGLFN (67 aa). The helical transmembrane segment at 286-306 threads the bilayer; that stretch reads VKIVFFSTILIEFLTGCLILL. Topologically, residues 307–337 are cytoplasmic; sequence MKFKKDPNIVPLTKPSIASPTQIPHLFCIAK.

Its subcellular location is the membrane. This is an uncharacterized protein from Dictyostelium discoideum (Social amoeba).